The sequence spans 129 residues: Large ribosomal subunit protein bL17 (129 aa).

The protein belongs to the bacterial ribosomal protein bL17 family. As to quaternary structure, part of the 50S ribosomal subunit. Contacts protein L32.

This Thiobacillus denitrificans (strain ATCC 25259 / T1) protein is Large ribosomal subunit protein bL17.